We begin with the raw amino-acid sequence, 182 residues long: uncharacterized protein (182 aa).

Residues 66 to 133 are a coiled coil; that stretch reads QKRKRREIKV…NLEIETNSDS (68 aa).

This is an uncharacterized protein from Acanthamoeba polyphaga (Amoeba).